The sequence spans 1462 residues: NK-tumor recognition protein (1462 aa).

The PPIase cyclophilin-type domain maps to 10–175; sequence HFDIEINREP…ADVRVIDCGV (166 aa). Disordered stretches follow at residues 187–591 and 607–627; these read KKRK…TMAQ and VIPLSDSPPPSRWKPGQKPWK. Positions 198 to 213 are enriched in low complexity; sequence SDSSSNSSSSSESSSE. Residues 221-240 show a composition bias toward basic residues; sequence SRRRKHKRRPKVKRSKKRRK. Composition is skewed to basic and acidic residues over residues 241–250 and 258–286; these read EASSSEEPRN and GHSERSDTNEKRSVDSSAKREKPVVRPEE. A Glycyl lysine isopeptide (Lys-Gly) (interchain with G-Cter in SUMO2) cross-link involves residue Lys323. Residues 329-345 are compositionally biased toward basic residues; it reads SGRKIKGRGTIRYHTPP. 3 positions are modified to phosphoserine: Ser379, Ser401, and Ser416. Over residues 382–402 the composition is skewed to basic and acidic residues; sequence KWSKGDKLSDPCSSRWDERSL. A compositionally biased stretch (polar residues) spans 403–421; the sequence is SQRSRSWSYNGYYSDLSTA. The segment covering 423–459 has biased composition (basic residues); the sequence is HSGHHKKRRKEKKVKHKKKGKKQKHCRRHKQTKKRRI. Phosphoserine is present on residues Ser463 and Ser471. Residues 497–507 show a composition bias toward basic and acidic residues; that stretch reads KRDWSKSDKDV. The segment covering 524–542 has biased composition (low complexity); it reads HSQSYSRGSSRSRTASKSS. Residues 543 to 568 are compositionally biased toward basic residues; sequence SHSRSRSKSRSSSKSGHRKRASKSPR. Residues Lys578 and Lys581 each participate in a glycyl lysine isopeptide (Lys-Gly) (interchain with G-Cter in SUMO2) cross-link. Ser613 is subject to Phosphoserine. Lys639 participates in a covalent cross-link: Glycyl lysine isopeptide (Lys-Gly) (interchain with G-Cter in SUMO2). Ser648 carries the post-translational modification Phosphoserine. Glycyl lysine isopeptide (Lys-Gly) (interchain with G-Cter in SUMO2) cross-links involve residues Lys656 and Lys666. The disordered stretch occupies residues 658 to 1072; sequence TGSSSSYHKR…EEDLSGKHDT (415 aa). Low complexity-rich tracts occupy residues 699–725 and 736–749; these read SRSYSRSYTRSRSLASSHSRSRSPSSR and SQCSRSSSYTSISS. The segment covering 754-774 has biased composition (basic residues); the sequence is RAKRRLRSSGKKNSVSHKKHS. Positions 775 to 800 are enriched in basic and acidic residues; it reads SSSEKTLHSKYVKGRDRSSCVRKYSE. Positions 801–815 are enriched in low complexity; the sequence is SRSSLDYSSDSEQSS. Basic and acidic residues-rich tracts occupy residues 823–870 and 885–909; these read QEKE…DHLR and WDSESNSERDVTKNSKNDSHPSSDK. Phosphoserine occurs at positions 866, 887, 889, 891, and 907. A compositionally biased stretch (acidic residues) spans 910 to 922; it reads EEGEATSDSESEV. Residues 932–969 are compositionally biased toward polar residues; the sequence is TTKSSTNTSLPDDNGAWKSSKQRTSTSDSEGSCSNSEN. Positions 988–1013 are enriched in basic residues; sequence EHTKKVKEKLKGKKDKKHKAPKRKQA. The span at 1022–1031 shows a compositional bias: acidic residues; it reads FGEEEEEEID. The segment covering 1032-1072 has biased composition (basic and acidic residues); sequence DKQVTQESKEKKVSENNETIKDNILKTEKSSEEDLSGKHDT. A Glycyl lysine isopeptide (Lys-Gly) (interchain with G-Cter in SUMO2) cross-link involves residue Lys1057. 2 positions are modified to phosphoserine: Ser1077 and Ser1146. The tract at residues 1129–1156 is disordered; it reads MEICTPDRSSPAKVEETSPLGNARLDTP. Position 1155 is a phosphothreonine (Thr1155). Residue Lys1163 forms a Glycyl lysine isopeptide (Lys-Gly) (interchain with G-Cter in SUMO2) linkage. Residues 1169-1215 form a disordered region; it reads EHPQAEVVKQESSMSESKVLGEVGKQDSSSASLASAGESTGKKEVAE. A Glycyl lysine isopeptide (Lys-Gly) (interchain with G-Cter in SUMO1); alternate cross-link involves residue Lys1177. A Glycyl lysine isopeptide (Lys-Gly) (interchain with G-Cter in SUMO2); alternate cross-link involves residue Lys1177. Ser1203 is modified (phosphoserine). Residues Lys1216, Lys1225, and Lys1258 each participate in a glycyl lysine isopeptide (Lys-Gly) (interchain with G-Cter in SUMO2) cross-link. Residues 1251–1462 are disordered; sequence LTTVPEMKPQ…RSPSESSRYS (212 aa). Residues 1311–1348 are arg/Ser tandem repeat-rich; that stretch reads SRSPSRSRSKSETKSRHRTRSVSYSHSRSRSRSSTSSY. Low complexity-rich tracts occupy residues 1331–1351 and 1359–1376; these read SVSYSHSRSRSRSSTSSYRSR and RGWYSRGRTRSRSSSYRS. Over residues 1377-1388 the composition is skewed to basic residues; sequence YKSHRTSSRSRS. A compositionally biased stretch (low complexity) spans 1389 to 1410; the sequence is RSSSYDPHSRSRSYTYDSYYSR. Over residues 1425 to 1435 the composition is skewed to basic residues; sequence RGRSYNRRSRS.

The protein resides in the cell membrane. It carries out the reaction [protein]-peptidylproline (omega=180) = [protein]-peptidylproline (omega=0). Inhibited by cyclosporin A (CsA). Functionally, PPIase that catalyzes the cis-trans isomerization of proline imidic peptide bonds in oligopeptides and may therefore assist protein folding. Component of a putative tumor-recognition complex involved in the function of NK cells. The chain is NK-tumor recognition protein from Homo sapiens (Human).